An 810-amino-acid chain; its full sequence is Transmembrane GTPase Marf (810 aa).

Topologically, residues 1-637 (MAAYLNRTIS…TTTPVEATPV (637 aa)) are cytoplasmic. Thr8 is modified (phosphothreonine). The disordered stretch occupies residues 13 to 40 (TGQTGPADDDRHASSTDTVDKSGPGSPL). Basic and acidic residues predominate over residues 20–32 (DDDRHASSTDTVD). Ser38 carries the phosphoserine modification. One can recognise a Dynamin-type G domain in the interval 134-382 (QRDHMKVAFF…IRYFEFQDFE (249 aa)). Positions 144–151 (GRTSNGKS) are G1 motif. 147–152 (SNGKSS) is a GTP binding site. The G2 motif stretch occupies residues 170-171 (TT). A G3 motif region spans residues 239–242 (DSPG). 298–301 (NRWD) provides a ligand contact to GTP. Positions 298-301 (NRWD) are G4 motif. Lys327 is a region of interest (G5 motif). A GTP-binding site is contributed by Ser345. The stretch at 427 to 476 (RNLKQDQKNLLTERIQGTETQMMQVTREMKMKIHNMVEEVEEKVSKALNE) forms a coiled coil. Thr553 is subject to Phosphothreonine. Phosphoserine is present on Ser554. The residue at position 555 (Thr555) is a Phosphothreonine. The tract at residues 609 to 630 (GQPALVNRQSSIGHSVSTPTTT) is disordered. Residues 638-648 (CLLPAPVVAGI) traverse the membrane as a helical segment. Topologically, residues 649-668 (TPEQLSLISRFAVSSIGSQG) are mitochondrial intermembrane. Residues 669 to 689 (TVGGLVVAGVMLKTIGWRVLV) form a helical membrane-spanning segment. Topologically, residues 690-810 (GVGALYGCIY…IFEHNYISPQ (121 aa)) are cytoplasmic. Positions 759 to 806 (TATTDMNDELKTLDSQLNILEANQKQLKLLRNKANYIQNELDIFEHNY) form a coiled coil.

The protein belongs to the TRAFAC class dynamin-like GTPase superfamily. Dynamin/Fzo/YdjA family. Mitofusin subfamily. As to quaternary structure, interacts with Mul1. In terms of processing, ubiquitinated by park and Mul1. Ubiquitinated, probably by HUWE1, when dietary stearate (C18:0) levels are low; ubiquitination inhibits mitochondrial fusion. In terms of tissue distribution, widely expressed in embryos, accumulating in the mesoderm and endoderm during gut development. In the male germ line, it is expressed in spermatogonia, spermatocytes and early spermatids.

The protein localises to the mitochondrion outer membrane. It catalyses the reaction GTP + H2O = GDP + phosphate + H(+). Mitochondrial outer membrane GTPase that mediates mitochondrial clustering and fusion. Mitochondrial fusion is the physical merging of mitochondria that gives rise to mitochondrial networks, and this process is counterbalanced by mitochondrial fission which fragments networks. Promotes, but is not required for park recruitment to dysfunctional mitochondria. The polypeptide is Transmembrane GTPase Marf (Marf) (Drosophila melanogaster (Fruit fly)).